The following is a 336-amino-acid chain: Adenosine deaminase (336 aa).

Zn(2+) contacts are provided by H15 and H17. Substrate-binding residues include H17, D19, and G172. H199 provides a ligand contact to Zn(2+). E202 acts as the Proton donor in catalysis. Zn(2+) is bound at residue D279.

Belongs to the metallo-dependent hydrolases superfamily. Adenosine and AMP deaminases family. Adenosine deaminase subfamily. Zn(2+) serves as cofactor.

The enzyme catalyses adenosine + H2O + H(+) = inosine + NH4(+). The catalysed reaction is 2'-deoxyadenosine + H2O + H(+) = 2'-deoxyinosine + NH4(+). Its function is as follows. Catalyzes the hydrolytic deamination of adenosine and 2-deoxyadenosine. In Streptococcus thermophilus (strain ATCC BAA-491 / LMD-9), this protein is Adenosine deaminase.